The following is a 431-amino-acid chain: MASNSILTLGPFKHRKDLTRESVLSTYQIIGYIAAGTYGKVYKAKLKNTASAEQLFAIKKFKSDNHSSNRSHHNHDINGNEIVHYTGISQSAIREMSLCRELNNKNITKLVDIILENKSIYMIFEFCEHDLLQIIHYHSHPEVKPIPQATVKSLIWQILNGVTFLHQNWIFHRDLKPANIMVSSSGVVKIGDLGLARKFNNPLQSLYTGDKVVVTIWYRAPELLLGARHYTPAIDLWAVGCILAELLSLRPIFKGEEAKIDINNKKSVPFQKNQFQKIVEVLGTPSMKNWPALNKYPEFISFQQQLTTNYPPNLVNWYKMIGSSNKQCLELLKGLLEYDPLVRLTADNALVHPYFLELPKVQENAFEGLNLKYPKRRIYTDDNDIISNQAINQNFKRHGGAYDDQHNNSNNNTNNSLNANNANNVPRKRAR.

In terms of domain architecture, Protein kinase spans 27 to 355 (YQIIGYIAAG…ADNALVHPYF (329 aa)). Residues 33 to 41 (IAAGTYGKV) and Lys-59 contribute to the ATP site. Asp-174 acts as the Proton acceptor in catalysis. Residues 397–431 (RHGGAYDDQHNNSNNNTNNSLNANNANNVPRKRAR) are disordered. Positions 407–424 (NNSNNNTNNSLNANNANN) are enriched in low complexity.

The protein belongs to the protein kinase superfamily. CMGC Ser/Thr protein kinase family. CDC2/CDKX subfamily. Component of the srb8-11 complex, a regulatory module of the Mediator complex. Mg(2+) serves as cofactor.

It is found in the nucleus. It carries out the reaction L-seryl-[protein] + ATP = O-phospho-L-seryl-[protein] + ADP + H(+). The catalysed reaction is L-threonyl-[protein] + ATP = O-phospho-L-threonyl-[protein] + ADP + H(+). The enzyme catalyses [DNA-directed RNA polymerase] + ATP = phospho-[DNA-directed RNA polymerase] + ADP + H(+). Component of the srb8-11 complex. The srb8-11 complex is a regulatory module of the Mediator complex which is itself dependent transcription. The srb8-11 complex may be involved in the transcriptional repression of a subset of genes regulated by Mediator. It may inhibit the association of the Mediator complex with RNA polymerase II to form the holoenzyme complex. The srb8-11 complex phosphorylates the C-terminal domain (CTD) of the largest subunit of RNA polymerase II. The protein is Serine/threonine-protein kinase SSN3 (SSN3) of Scheffersomyces stipitis (strain ATCC 58785 / CBS 6054 / NBRC 10063 / NRRL Y-11545) (Yeast).